A 437-amino-acid chain; its full sequence is Phosphomethylpyrimidine synthase (437 aa).

Substrate-binding positions include N69, M98, Y127, H163, 185 to 187 (SRG), 226 to 229 (DACR), and E265. H269 contacts Zn(2+). Y292 lines the substrate pocket. H333 is a binding site for Zn(2+). Positions 409, 412, and 416 each coordinate [4Fe-4S] cluster.

It belongs to the ThiC family. It depends on [4Fe-4S] cluster as a cofactor.

The catalysed reaction is 5-amino-1-(5-phospho-beta-D-ribosyl)imidazole + S-adenosyl-L-methionine = 4-amino-2-methyl-5-(phosphooxymethyl)pyrimidine + CO + 5'-deoxyadenosine + formate + L-methionine + 3 H(+). It functions in the pathway cofactor biosynthesis; thiamine diphosphate biosynthesis. Catalyzes the synthesis of the hydroxymethylpyrimidine phosphate (HMP-P) moiety of thiamine from aminoimidazole ribotide (AIR) in a radical S-adenosyl-L-methionine (SAM)-dependent reaction. The protein is Phosphomethylpyrimidine synthase of Clostridium botulinum (strain ATCC 19397 / Type A).